The chain runs to 182 residues: ATP synthase subunit delta (182 aa).

The protein belongs to the ATPase delta chain family. As to quaternary structure, F-type ATPases have 2 components, F(1) - the catalytic core - and F(0) - the membrane proton channel. F(1) has five subunits: alpha(3), beta(3), gamma(1), delta(1), epsilon(1). F(0) has three main subunits: a(1), b(2) and c(10-14). The alpha and beta chains form an alternating ring which encloses part of the gamma chain. F(1) is attached to F(0) by a central stalk formed by the gamma and epsilon chains, while a peripheral stalk is formed by the delta and b chains.

It is found in the cell inner membrane. In terms of biological role, f(1)F(0) ATP synthase produces ATP from ADP in the presence of a proton or sodium gradient. F-type ATPases consist of two structural domains, F(1) containing the extramembraneous catalytic core and F(0) containing the membrane proton channel, linked together by a central stalk and a peripheral stalk. During catalysis, ATP synthesis in the catalytic domain of F(1) is coupled via a rotary mechanism of the central stalk subunits to proton translocation. This protein is part of the stalk that links CF(0) to CF(1). It either transmits conformational changes from CF(0) to CF(1) or is implicated in proton conduction. In Histophilus somni (strain 129Pt) (Haemophilus somnus), this protein is ATP synthase subunit delta.